A 533-amino-acid chain; its full sequence is Histone-arginine methyltransferase CARMER (533 aa).

Positions alanine 143–histidine 452 constitute an SAM-dependent MTase PRMT-type domain. Residues glutamine 156, arginine 165, glycine 189, glutamate 211, glutamate 240, and threonine 268 each coordinate S-adenosyl-L-methionine. Arginine 503 is modified (asymmetric dimethylarginine; by autocatalysis).

The protein belongs to the class I-like SAM-binding methyltransferase superfamily. Protein arginine N-methyltransferase family. As to quaternary structure, homodimer. In terms of processing, the dimethylated protein is the major form.

It localises to the cytoplasm. The protein localises to the nucleus. The enzyme catalyses L-arginyl-[protein] + 2 S-adenosyl-L-methionine = N(omega),N(omega)-dimethyl-L-arginyl-[protein] + 2 S-adenosyl-L-homocysteine + 2 H(+). Methylates (mono- and asymmetric dimethylation) the guanidino nitrogens of arginyl residues in proteins. May methylate histone H3 at 'Arg-17' and activate transcription via chromatin remodeling. The protein is Histone-arginine methyltransferase CARMER (Art4) of Drosophila willistoni (Fruit fly).